Reading from the N-terminus, the 160-residue chain is Transcriptional repressor NrdR (160 aa).

The segment at 3–34 is a zinc-finger region; the sequence is CPFCGAEDTSVVDSRVSEEGSRIRRRRQCTAC. In terms of domain architecture, ATP-cone spans 49–139; it reads PQIIKQGGNR…VYRSFEDVGD (91 aa).

Belongs to the NrdR family. Zn(2+) serves as cofactor.

Its function is as follows. Negatively regulates transcription of bacterial ribonucleotide reductase nrd genes and operons by binding to NrdR-boxes. The sequence is that of Transcriptional repressor NrdR from Nitrosomonas eutropha (strain DSM 101675 / C91 / Nm57).